The following is a 410-amino-acid chain: Argininosuccinate synthase (410 aa).

9 to 17 contributes to the ATP binding site; sequence AYSGGLDTS. Residue Tyr-86 coordinates L-citrulline. Gly-116 serves as a coordination point for ATP. L-aspartate contacts are provided by Thr-118, Asn-122, and Asp-123. Residue Asn-122 coordinates L-citrulline. The L-citrulline site is built by Arg-126, Ser-174, Glu-259, and Tyr-271.

The protein belongs to the argininosuccinate synthase family. Type 1 subfamily. In terms of assembly, homotetramer.

The protein resides in the cytoplasm. It catalyses the reaction L-citrulline + L-aspartate + ATP = 2-(N(omega)-L-arginino)succinate + AMP + diphosphate + H(+). It functions in the pathway amino-acid biosynthesis; L-arginine biosynthesis; L-arginine from L-ornithine and carbamoyl phosphate: step 2/3. The polypeptide is Argininosuccinate synthase (Limosilactobacillus reuteri (strain DSM 20016) (Lactobacillus reuteri)).